We begin with the raw amino-acid sequence, 359 residues long: Fructose-bisphosphate aldolase, cytoplasmic isozyme (359 aa).

Positions 52 and 142 each coordinate substrate. E184 functions as the Proton acceptor in the catalytic mechanism. K226 functions as the Schiff-base intermediate with dihydroxyacetone-P in the catalytic mechanism.

This sequence belongs to the class I fructose-bisphosphate aldolase family.

It is found in the cytoplasm. It catalyses the reaction beta-D-fructose 1,6-bisphosphate = D-glyceraldehyde 3-phosphate + dihydroxyacetone phosphate. It functions in the pathway carbohydrate degradation; glycolysis; D-glyceraldehyde 3-phosphate and glycerone phosphate from D-glucose: step 4/4. In Cicer arietinum (Chickpea), this protein is Fructose-bisphosphate aldolase, cytoplasmic isozyme (ALDC).